Reading from the N-terminus, the 239-residue chain is RNA-binding protein 38 (239 aa).

The RRM domain maps to Thr-34–Leu-111.

Belongs to the RBM38 family.

Its subcellular location is the cytoplasm. The protein localises to the cytosol. It is found in the nucleus. RNA-binding protein that specifically bind the 3'-UTR of CDKN1A transcripts, leading to maintain the stability of CDKN1A transcripts, thereby acting as a mediator of the p53/TP53 family to regulate CDKN1A. CDKN1A is a cyclin-dependent kinase inhibitor transcriptionally regulated by the p53/TP53 family to induce cell cycle arrest. Isoform 1, but not isoform 2, has the ability to induce cell cycle arrest in G1 and maintain the stability of CDKN1A transcripts induced by p53/TP53. Also acts as a mRNA splicing factor. Specifically regulates the expression of FGFR2-IIIb, an epithelial cell-specific isoform of FGFR2. Plays a role in myogenic differentiation. Its function is as follows. (Microbial infection) Essential factor for the splicing of the pre-mRNAs of human parvovirus B19 (B19V) and for the expression of B19V 11-kDa protein, which enhances viral replication. The polypeptide is RNA-binding protein 38 (RBM38) (Homo sapiens (Human)).